A 395-amino-acid chain; its full sequence is MEGPQELLSGKLRLCFTPAARTSLLLLKLNDAALRALQECHRQQVRPVIAFQGNRGYLRLPGPHWSCLFSFIVSQCGQEGPGGPGLDLVCQCPGRSGPNRLHCLGPLRERLTIWAAMDSIPAPSSLQRHNRTEDARDRESWQNVGDYPEADTISQSQMGLEEVPDPLASSQGQSLPGSSREHMAQWEVRNQTLLPNRDPDQALPPSASQKHVDKKRPAPAAMVELKQKRLRTLAPSPLQGLPSQDLQEEDWEQEDKDEDMGPRLEHSPSVQADSESLSPEEVPDYLLQYRAIHSAEQQHAYEQDFETDYAEYRILHARVAAASQRFIELAAEMNNVQRGTPEHKALEEKIVQEYKKFRKRYPGYREEKRRCEYLHQKLSHIKGLILEFEEKNRGS.

Disordered regions lie at residues 124-149, 163-182, 194-218, and 233-279; these read SSLQ…DYPE, VPDP…SREH, LPNR…KRPA, and LAPS…SLSP. Residues 130–140 are compositionally biased toward basic and acidic residues; it reads NRTEDARDRES. Residues 168-177 are compositionally biased toward polar residues; the sequence is ASSQGQSLPG. Over residues 246-258 the composition is skewed to acidic residues; it reads LQEEDWEQEDKDE. Residues 268–277 are compositionally biased toward polar residues; it reads PSVQADSESL. An OCEL domain is found at 283–393; the sequence is PDYLLQYRAI…LILEFEEKNR (111 aa).

The protein belongs to the ELL/occludin family. As to quaternary structure, interacts with AFF4. Component of the super elongation complex (SEC), at least composed of EAF1, EAF2, CDK9, MLLT3/AF9, AFF (AFF1 or AFF4), the P-TEFb complex and ELL (ELL, ELL2 or ELL3). Component of the little elongation complex (LEC), at least composed of ELL (ELL, ELL2 or ELL3), ZC3H8, ICE1 and ICE2.

It localises to the nucleus. Its function is as follows. Enhancer-binding elongation factor that specifically binds enhancers in embryonic stem cells (ES cells), marks them, and is required for their future activation during stem cell specification. Elongation factor component of the super elongation complex (SEC), a complex required to increase the catalytic rate of RNA polymerase II transcription by suppressing transient pausing by the polymerase at multiple sites along the DNA. Component of the little elongation complex (LEC), a complex required to regulate small nuclear RNA (snRNA) gene transcription by RNA polymerase II and III. Does not only bind to enhancer regions of active genes, but also marks the enhancers that are in a poised or inactive state in ES cells and is required for establishing proper RNA polymerase II occupancy at developmentally regulated genes in a cohesin-dependent manner. Probably required for priming developmentally regulated genes for later recruitment of the super elongation complex (SEC), for transcriptional activation during differentiation. Required for recruitment of P-TEFb within SEC during differentiation. Probably preloaded on germ cell chromatin, suggesting that it may prime gene activation by marking enhancers as early as in the germ cells. Promoting epithelial-mesenchymal transition (EMT). This chain is RNA polymerase II elongation factor ELL3 (ELL3), found in Bos taurus (Bovine).